Reading from the N-terminus, the 50-residue chain is Large ribosomal subunit protein eL39 (50 aa).

This sequence belongs to the eukaryotic ribosomal protein eL39 family.

In Methanoculleus marisnigri (strain ATCC 35101 / DSM 1498 / JR1), this protein is Large ribosomal subunit protein eL39.